Reading from the N-terminus, the 173-residue chain is Orotate phosphoribosyltransferase (173 aa).

Residues arginine 87, lysine 88, lysine 91, and 113–121 contribute to the 5-phospho-alpha-D-ribose 1-diphosphate site; that span reads EDIATTGQS. Residues threonine 117 and arginine 145 each coordinate orotate.

The protein belongs to the purine/pyrimidine phosphoribosyltransferase family. PyrE subfamily. In terms of assembly, homodimer. Mg(2+) is required as a cofactor.

It carries out the reaction orotidine 5'-phosphate + diphosphate = orotate + 5-phospho-alpha-D-ribose 1-diphosphate. The protein operates within pyrimidine metabolism; UMP biosynthesis via de novo pathway; UMP from orotate: step 1/2. Its function is as follows. Catalyzes the transfer of a ribosyl phosphate group from 5-phosphoribose 1-diphosphate to orotate, leading to the formation of orotidine monophosphate (OMP). This chain is Orotate phosphoribosyltransferase, found in Natronomonas pharaonis (strain ATCC 35678 / DSM 2160 / CIP 103997 / JCM 8858 / NBRC 14720 / NCIMB 2260 / Gabara) (Halobacterium pharaonis).